We begin with the raw amino-acid sequence, 310 residues long: MGAGIIGVGRYVPEKVLTNFDLEKMMDTSDEWIRTRTGIEERRIAADDIDTSDMAYFAAKRALQDAGMEAKDIDLILVATVTPDRPFPSVACMLQERLGAVNAAALDISAACAGFMYGMVTAAQFIDTGAYKYILVVGADKLSKITDWTDRNTAVLFGDGAGAVVMGPVSPGRGILSFELGADGTGGKHLYKDEYIVMNGREVFKFAVRQMGESSVRVLEKAGLTKDDVDFLIPHQANIRIVEAARQRLELPEEKISTTIRRYGNTSAASIPISLVEELEAGKIHDDDLIIMVGFGGGLTWGAIALRWGR.

Active-site residues include Cys112 and His235. An ACP-binding region spans residues 236-240 (QANIR). Asn265 is an active-site residue.

It belongs to the thiolase-like superfamily. FabH family. In terms of assembly, homodimer.

The protein resides in the cytoplasm. The catalysed reaction is malonyl-[ACP] + acetyl-CoA + H(+) = 3-oxobutanoyl-[ACP] + CO2 + CoA. The protein operates within lipid metabolism; fatty acid biosynthesis. Catalyzes the condensation reaction of fatty acid synthesis by the addition to an acyl acceptor of two carbons from malonyl-ACP. Catalyzes the first condensation reaction which initiates fatty acid synthesis and may therefore play a role in governing the total rate of fatty acid production. Possesses both acetoacetyl-ACP synthase and acetyl transacylase activities. Its substrate specificity determines the biosynthesis of branched-chain and/or straight-chain of fatty acids. The sequence is that of Beta-ketoacyl-[acyl-carrier-protein] synthase III from Geobacillus kaustophilus (strain HTA426).